The following is a 31-amino-acid chain: Photosystem II reaction center protein T (31 aa).

Residues 3–23 (ALVYTFLLVTTLGILFFSIIF) form a helical membrane-spanning segment.

It belongs to the PsbT family. As to quaternary structure, PSII is composed of 1 copy each of membrane proteins PsbA, PsbB, PsbC, PsbD, PsbE, PsbF, PsbH, PsbI, PsbJ, PsbK, PsbL, PsbM, PsbT, PsbX, PsbY, PsbZ, Psb30/Ycf12, at least 3 peripheral proteins of the oxygen-evolving complex and a large number of cofactors. It forms dimeric complexes.

It localises to the plastid. It is found in the cyanelle thylakoid membrane. Functionally, found at the monomer-monomer interface of the photosystem II (PS II) dimer, plays a role in assembly and dimerization of PSII. PSII is a light-driven water plastoquinone oxidoreductase, using light energy to abstract electrons from H(2)O, generating a proton gradient subsequently used for ATP formation. The polypeptide is Photosystem II reaction center protein T (Cyanophora paradoxa).